The sequence spans 525 residues: GMP synthase [glutamine-hydrolyzing] (525 aa).

Residues 9–207 (RILILDFGSQ…VQDICGCEAL (199 aa)) form the Glutamine amidotransferase type-1 domain. The Nucleophile role is filled by Cys86. Active-site residues include His181 and Glu183. The 193-residue stretch at 208–400 (WTASNIVEDA…LGLPYDMVYR (193 aa)) folds into the GMPS ATP-PPase domain. 235–241 (SGGVDSS) lines the ATP pocket.

Homodimer.

The catalysed reaction is XMP + L-glutamine + ATP + H2O = GMP + L-glutamate + AMP + diphosphate + 2 H(+). It participates in purine metabolism; GMP biosynthesis; GMP from XMP (L-Gln route): step 1/1. In terms of biological role, catalyzes the synthesis of GMP from XMP. In Pseudomonas entomophila (strain L48), this protein is GMP synthase [glutamine-hydrolyzing].